We begin with the raw amino-acid sequence, 114 residues long: Large ribosomal subunit protein uL18 (114 aa).

The protein belongs to the universal ribosomal protein uL18 family. Part of the 50S ribosomal subunit; part of the 5S rRNA/L5/L18/L25 subcomplex. Contacts the 5S and 23S rRNAs.

Functionally, this is one of the proteins that bind and probably mediate the attachment of the 5S RNA into the large ribosomal subunit, where it forms part of the central protuberance. This Porphyromonas gingivalis (strain ATCC 33277 / DSM 20709 / CIP 103683 / JCM 12257 / NCTC 11834 / 2561) protein is Large ribosomal subunit protein uL18.